A 70-amino-acid polypeptide reads, in one-letter code: Large ribosomal subunit protein eL38 (70 aa).

It belongs to the eukaryotic ribosomal protein eL38 family.

The sequence is that of Large ribosomal subunit protein eL38 (rpl-38) from Caenorhabditis elegans.